Here is a 186-residue protein sequence, read N- to C-terminus: Intraflagellar transport protein 27 homolog (186 aa).

GTP-binding positions include 12–19 (GDPTVGKT), 64–68 (DSAGK), and 123–126 (NKTD).

This sequence belongs to the small GTPase superfamily. Rab family. In terms of assembly, component of the IFT complex B, at least composed of IFT20, IFT22, IFT25, IFT27, IFT46, IFT52, TRAF3IP1/IFT54, IFT57, IFT74, IFT80, IFT81, and IFT88. Interacts with IFT25. Interacts with IFT70B. Interacts with RABL2/RABL2A; binding is equal in the presence of GTP or GDP. Interacts with IFT88. Interacts with ARL6; recognizes and binds with the GTP-free form of ARL6.

The protein resides in the cell projection. It localises to the cilium. Its subcellular location is the cytoplasm. The protein localises to the flagellum. Functionally, small GTPase-like component of the intraflagellar transport (IFT) complex B that promotes the exit of the BBSome complex from cilia via its interaction with ARL6. Not involved in entry of the BBSome complex into cilium. Prevents aggregation of GTP-free ARL6. Required for hedgehog signaling. Forms a subcomplex within the IFT complex B with IFT25. Its role in intraflagellar transport is mainly seen in tissues rich in ciliated cells such as kidney and testis. Essential for male fertility, spermiogenesis and sperm flagella formation. Plays a role in the early development of the kidney. May be involved in the regulation of ureteric bud initiation. This is Intraflagellar transport protein 27 homolog (IFT27) from Bos taurus (Bovine).